A 275-amino-acid polypeptide reads, in one-letter code: NAD kinase (275 aa).

Aspartate 53 (proton acceptor) is an active-site residue. Residues 53-54 (DG), 129-130 (NE), arginine 155, aspartate 157, and 168-173 (TAYNKS) contribute to the NAD(+) site.

This sequence belongs to the NAD kinase family. A divalent metal cation is required as a cofactor.

It is found in the cytoplasm. It carries out the reaction NAD(+) + ATP = ADP + NADP(+) + H(+). Functionally, involved in the regulation of the intracellular balance of NAD and NADP, and is a key enzyme in the biosynthesis of NADP. Catalyzes specifically the phosphorylation on 2'-hydroxyl of the adenosine moiety of NAD to yield NADP. The protein is NAD kinase of Streptococcus agalactiae serotype Ia (strain ATCC 27591 / A909 / CDC SS700).